Consider the following 3184-residue polypeptide: WD repeat- and FYVE domain-containing protein 4 (3184 aa).

A compositionally biased stretch (basic and acidic residues) spans 1-18; the sequence is MEAEDLSKAEDRNEDPGS. Disordered regions lie at residues 1–39, 944–993, 1837–1869, and 2309–2335; these read MEAE…QSSS, SHTH…QDST, VGAE…KAHP, and ALSS…NQDE. A compositionally biased stretch (polar residues) spans 981-993; that stretch reads QAPQPLGESQDST. Residues 2314–2324 are compositionally biased toward basic and acidic residues; it reads RHKESQDKNDH. Residues 2385–2510 form the BEACH-type PH domain; sequence LDKEKVTQKF…DRSKAFKSFC (126 aa). The 295-residue stretch at 2527–2821 folds into the BEACH domain; the sequence is SLRRYPGSDR…QLFTKPHPAR (295 aa). WD repeat units lie at residues 2863–2922, 2923–2972, 2973–3014, 3015–3057, 3058–3141, and 3142–3184; these read MYLF…YGSD, KVLM…PRGL, RLRQ…LDHL, THVT…GQPL, ASIT…ELDV, and SIAL…SADG. The segment at 3107 to 3128 is disordered; it reads SVPGRPAGEEPPAQPPSPRGHK.

As to quaternary structure, interacts with HSP90AB1.

It is found in the early endosome. The protein localises to the endoplasmic reticulum. Plays a critical role in the regulation of cDC1-mediated cross-presentation of viral and tumor antigens in dendritic cells. Mechanistically, acts near the plasma membrane and interacts with endosomal membranes to promote endosomal-to-cytosol antigen trafficking. Also plays a role in B-cell survival through regulation of autophagy. The sequence is that of WD repeat- and FYVE domain-containing protein 4 (WDFY4) from Homo sapiens (Human).